A 501-amino-acid polypeptide reads, in one-letter code: Eukaryotic translation initiation factor 3 subunit E (501 aa).

Positions 245 to 423 constitute a PCI domain; the sequence is CDLFFYTPYL…ESIESTSTNV (179 aa). 2 positions are modified to phosphoserine: Ser477 and Ser479.

This sequence belongs to the eIF-3 subunit E family. In terms of assembly, component of the eukaryotic translation initiation factor 3 (eIF-3) complex. The eIF-3 complex appears to include tif32/eif3a, SPAC25G10.08/eif3b, tif33/eif3c, SPBC4C3.07/eif3f, tif35/eif3g and sum1/eif3i. This set of common subunits may also associate exclusively with either moe1/eif3d and int6/eif3e, or with SPAC821.05/eif3h and SPAC1751.03/eif3m. The eIF-3 complex may also include SPAC3A12.13c/eif3j. Also interacts with the proteasome via rpn501/rpn502.

Its subcellular location is the cytoplasm. Component of the eukaryotic translation initiation factor 3 (eIF-3) complex, which is involved in protein synthesis of a specialized repertoire of mRNAs and, together with other initiation factors, stimulates binding of mRNA and methionyl-tRNAi to the 40S ribosome. The eIF-3 complex specifically targets and initiates translation of a subset of mRNAs involved in cell proliferation (Potential). Required for maintaining the basal level of atf1 and for transcriptional activation of core environmental stress response genes (CESR genes) in response to histidine starvation. May positively regulate proteasome activity. Required for nuclear localization of the proteasome subunit rpn501/rpn502. This chain is Eukaryotic translation initiation factor 3 subunit E (int6), found in Schizosaccharomyces pombe (strain 972 / ATCC 24843) (Fission yeast).